Reading from the N-terminus, the 380-residue chain is Cytochrome b (380 aa).

Transmembrane regions (helical) follow at residues 33–53 (FGSLLGLCLITQILTGLFLAM), 77–98 (WLIRNLHANGASFFFICMYLHV), 113–133 (WNIGVILLLLVMMTAFVGYVL), and 178–198 (FFAFHFILPFIVAAAVILHLL). Residues His83 and His97 each coordinate heme b. 2 residues coordinate heme b: His182 and His196. His201 contributes to the a ubiquinone binding site. 4 consecutive transmembrane segments (helical) span residues 226–246 (YKDILGFIVMLLALITLALFS), 288–308 (LGGVLALLFSILVLMIVPILH), 320–340 (FSQFLFWVLVADMLILTWIGG), and 347–367 (FIIIGQIASILYFTLFLLLIP).

Belongs to the cytochrome b family. As to quaternary structure, the cytochrome bc1 complex contains 3 respiratory subunits (MT-CYB, CYC1 and UQCRFS1), 2 core proteins (UQCRC1 and UQCRC2) and probably 6 low-molecular weight proteins. It depends on heme b as a cofactor.

It localises to the mitochondrion inner membrane. Functionally, component of the ubiquinol-cytochrome c reductase complex (complex III or cytochrome b-c1 complex) that is part of the mitochondrial respiratory chain. The b-c1 complex mediates electron transfer from ubiquinol to cytochrome c. Contributes to the generation of a proton gradient across the mitochondrial membrane that is then used for ATP synthesis. This Arapaima gigas (Arapaima) protein is Cytochrome b (mt-cyb).